The sequence spans 274 residues: N-acetylmuramic acid 6-phosphate etherase (274 aa).

In terms of domain architecture, SIS spans 54–217; that stretch reads IIPRIDSGGR…STSVMIKLGR (164 aa). Catalysis depends on Glu-82, which acts as the Proton donor. The active site involves Glu-113.

Belongs to the GCKR-like family. MurNAc-6-P etherase subfamily. As to quaternary structure, homodimer.

The catalysed reaction is N-acetyl-D-muramate 6-phosphate + H2O = N-acetyl-D-glucosamine 6-phosphate + (R)-lactate. The protein operates within amino-sugar metabolism; N-acetylmuramate degradation. In terms of biological role, specifically catalyzes the cleavage of the D-lactyl ether substituent of MurNAc 6-phosphate, producing GlcNAc 6-phosphate and D-lactate. In Christiangramia forsetii (strain DSM 17595 / CGMCC 1.15422 / KT0803) (Gramella forsetii), this protein is N-acetylmuramic acid 6-phosphate etherase.